The sequence spans 60 residues: Large ribosomal subunit protein bL32 (60 aa).

Positions 1-60 (MAVQQNKKSPSKRGMHRSHDFLVNPPTAIEPTTGESHLRHHISPNGFYRGRKILKTKADE) are disordered. The span at 49 to 60 (RGRKILKTKADE) shows a compositional bias: basic residues.

The protein belongs to the bacterial ribosomal protein bL32 family.

The sequence is that of Large ribosomal subunit protein bL32 from Bordetella avium (strain 197N).